The chain runs to 157 residues: Transcriptional regulator AzlB (157 aa).

The region spanning 5-66 (LDETDKAILR…IVDEKKLGIE (62 aa)) is the HTH asnC-type domain. The segment at residues 24–43 (NLNLSKKIGLSPSACLARTK) is a DNA-binding region (H-T-H motif).

In terms of biological role, transcriptional repressor of the azlBCD operon involved in branched-chain amino acid transport. The sequence is that of Transcriptional regulator AzlB (azlB) from Bacillus subtilis (strain 168).